The sequence spans 1182 residues: MKTYQIGKRTRYSFGKVDEIIQVPDLVEIQRKSFEELLNHGILRILKKFSPITSAKVEGRREKGFNLEFVNFRVGAPLHSVEECKQRLLTYVAPFYATVRVTDVSTGEMREEEVSLGNYPIMTENQTFVINGVERVVVSQLVRSPGVYFVEEPTKNIGAKPIYLAHFLPVRGVWLEIMLNLNDETLYARIDRRKRLNLFLVLKTLGFQNDIDILSLFPAYLDVEDDYSLKQSEGIIILEKIVSKSGEVIAEKGSVLTSTLVEILREHGIEKIKVVNNYMFKTYMKLKEKLKMPLEENISELRAFMEIYKELRPGEVFRYNAAKSYWNNLYFNEERFELSEVGRYKMNKKLTNAYRKYLIEIEGRNPKSVERIEYEEKSNALTPIDIILVIRMLLETEKHPETLDTKDHLSNKRVKTVGELIGSEFERAFSKSIHQIQEKLATYTSLDKISIPSLINLRNVIASLNSFFATNPLSQFMDQVNPIAELTHKRRLTAVGPGGLKRERARFEVRDVHHSHYGRMCPIETPEGGNIGLITSLSVYATIDEYGFLVTPYRRITNGKLANEVVYLAADEEENYKIASVTIAFDKEGNIIQERVPVRYLEKIVYVHKNEVDLVDISPKQIVSVTTSLIPFLEHDDANRALMGSNMQRQAVPVIKPEAPFVGTGMEYAAAIYSGHVVLAKNDGVVKKVDGRKIIIHRIDENGQLMYDKKGNPIIDEYTLLKYVRSNQDTSITQKPIVNVGDFVKKGSPIADGPATDNGELALGKNVLVAFLPWEGYNFEDAILVSEELLEEDTFTSVHIEVYETTARETRVGPEEITSEIPNVSKENIRNLDENGIIRIGAYVGKQKYFTSQDILVGKVTPKGESDASPEEKIMRSVFGEKGKDVKDSSLRVPHGVEGRVIGVHVFHKEEVGDLGPGVNTLVRVYLATRKPLEVGDKLAGRHGNKGVVSMILPKEDMPFLPDGTPVQVVLSPLGVPSRMNIGQVLETSLGWLAKLTNRYFATPVFDGAKEDDILPELYKVRETLNLHHGDDPNNPSGKVTLRDGRTGKEFDFPVLVGYMYIMKLIHIARDKIHARATGPYSLIHQQPLGGKAQFGGQRFGEMEVWALEAYGASYTLNEMLTVKSDDIKGRTEVYKAIMKSKNLPEPGLPESFKVLVRELKGLALDVRVYDEHGNEIDIEKL.

It belongs to the RNA polymerase beta chain family. In terms of assembly, the RNAP catalytic core consists of 2 alpha, 1 beta, 1 beta' and 1 omega subunit. When a sigma factor is associated with the core the holoenzyme is formed, which can initiate transcription.

It catalyses the reaction RNA(n) + a ribonucleoside 5'-triphosphate = RNA(n+1) + diphosphate. Functionally, DNA-dependent RNA polymerase catalyzes the transcription of DNA into RNA using the four ribonucleoside triphosphates as substrates. The protein is DNA-directed RNA polymerase subunit beta of Fervidobacterium nodosum (strain ATCC 35602 / DSM 5306 / Rt17-B1).